We begin with the raw amino-acid sequence, 278 residues long: Autotransporter adhesin BtaF (278 aa).

A signal peptide spans 1–29 (MKLPPVFVFELVENQGLANIALIRPRVIA). The tract at residues 30 to 182 (PDNNLRPGGI…RAAIRQNSAA (153 aa)) is surface exposed passenger domain. The tract at residues 186-224 (LGQRVDGLQGQINSARKEARAGAANAAALSGLRYDNRPG) is outer membrane translocation of the passenger domain. The interval 225-278 (KVSIATGVGGFKGSTALAAGIGYTSKNENARYNVSVAYNEAGTSWNAGASFTLN) is translocator domain.

The protein belongs to the autotransporter-2 (AT-2) (TC 1.B.40) family. In terms of assembly, homotrimer.

The protein resides in the cell surface. It localises to the cell outer membrane. Functionally, participates in bacterial attachment to several surfaces, including various extracellular matrix (ECM) components and a hydrophobic abiotic surface. Involved in adhesion to host epithelial cells and is required for full virulence in mice. Also implicated in the resistance to porcine serum. In Brucella suis biovar 1 (strain 1330), this protein is Autotransporter adhesin BtaF.